Consider the following 526-residue polypeptide: Fluoride export protein 1 (526 aa).

Disordered regions lie at residues 1–73 and 90–149; these read MMTA…RRAS and ASNI…KQAG. Over 1–159 the chain is Cytoplasmic; sequence MMTAPSDTEG…VVAKRQKVSR (159 aa). Basic and acidic residues-rich tracts occupy residues 21 to 36 and 103 to 123; these read SPDRNRQRNLVDDHNH and PITRLDTLERVRTRDRDYLRE. A helical transmembrane segment spans residues 160–180; that stretch reads LATELYTISYLIFFSLLGTLA. Topologically, residues 181–194 are extracellular; it reads RLGLQALTSAYPQS. Residues 195 to 215 traverse the membrane as a helical segment; the sequence is PIIFPSIWPNFAGCVVMGFLA. Residues 216–260 lie on the Cytoplasmic side of the membrane; that stretch reads EDRMLFRPDWGQQQPNPKKDDDDDEEAKDIDPAAAKKAHMALKKT. A disordered region spans residues 223 to 242; that stretch reads PDWGQQQPNPKKDDDDDEEA. The helical transmembrane segment at 261–281 threads the bilayer; the sequence is IPLYVGLATGFCGSFTSFSSF. Topologically, residues 282–310 are extracellular; sequence IRDIYLALSNDLAAHGSSAAPVSRNGGYS. The chain crosses the membrane as a helical span at residues 311–331; the sequence is FMALLAVTITTISLSLSGLFA. The Cytoplasmic portion of the chain corresponds to 332 to 361; the sequence is GAHLAIAIATLFTRFDLGLPYTFVSRILDR. A helical transmembrane segment spans residues 362 to 382; that stretch reads LIVLLGFGCWLGAVLLSIWPP. Over 383-398 the chain is Extracellular; that stretch reads DRHSAQPEKERWRGTA. The chain crosses the membrane as a helical span at residues 399 to 419; it reads TFALVFAPLGCLTRFYASAHL. The Cytoplasmic portion of the chain corresponds to 420 to 424; that stretch reads NGRLP. Residues 425–445 traverse the membrane as a helical segment; that stretch reads SFPLGTFVVNMLGTAVLGMAW. The Extracellular segment spans residues 446–452; sequence DLNHVPS. The helical transmembrane segment at 453-473 threads the bilayer; it reads LGGVVGCQVLQGVADGFCGCL. Residues 474 to 492 are Cytoplasmic-facing; the sequence is TTVSTWVSELAALRRRHAY. Residues 493 to 513 form a helical membrane-spanning segment; it reads VYGGASVGGGLALMVVVMGSL. Over 514–526 the chain is Extracellular; the sequence is RWTEGFGEVKCIS.

It belongs to the fluoride channel Fluc/FEX (TC 1.A.43) family.

The protein resides in the cell membrane. The catalysed reaction is fluoride(in) = fluoride(out). Functionally, fluoride channel required for the rapid expulsion of cytoplasmic fluoride. The sequence is that of Fluoride export protein 1 from Neurospora crassa (strain ATCC 24698 / 74-OR23-1A / CBS 708.71 / DSM 1257 / FGSC 987).